We begin with the raw amino-acid sequence, 329 residues long: Endo-beta-N-acetylglucosaminidase F3 (329 aa).

A signal peptide (or 40, or 41) is located at residues 1 to 39 (MKKIFFAQCSILLLMLGSCSKMTEDMTPESVNKEASVKS). The GH18 domain maps to 48 to 329 (GVCIAYYITD…ANAVRDAVKN (282 aa)). Thr88 carries O-linked (Man...) threonine glycosylation. The active-site Proton donor is the Glu167.

Belongs to the glycosyl hydrolase 18 family. In terms of assembly, monomer. In terms of processing, carbohydrate at Thr-88 consists of (2-OMe)Man1-4GlcNAcU1-4GlcU1-4Glc1-4(2-OMe)GlcU1-4[(2-OMe)Rham1-2]Man.

Its subcellular location is the secreted. The catalysed reaction is an N(4)-(oligosaccharide-(1-&gt;3)-[oligosaccharide-(1-&gt;6)]-beta-D-Man-(1-&gt;4)-beta-D-GlcNAc-(1-&gt;4)-alpha-D-GlcNAc)-L-asparaginyl-[protein] + H2O = an oligosaccharide-(1-&gt;3)-[oligosaccharide-(1-&gt;6)]-beta-D-Man-(1-&gt;4)-D-GlcNAc + N(4)-(N-acetyl-beta-D-glucosaminyl)-L-asparaginyl-[protein]. Its function is as follows. Endohydrolysis of the di-N-acetylchitobiosyl unit in high-mannose glycopeptides and glycoproteins. Hydrolyzes bi- and triantennary glycans. The presence of a core-bound fucose greatly augments endo F3 activity on biantennary and, presumably, triantennary oligosaccharides. The sequence is that of Endo-beta-N-acetylglucosaminidase F3 (endOF3) from Elizabethkingia meningoseptica (Chryseobacterium meningosepticum).